Reading from the N-terminus, the 247-residue chain is UPF0259 membrane protein BUAPTUC7_273 (247 aa).

Transmembrane regions (helical) follow at residues 20-40, 85-105, 114-134, 137-157, 188-208, and 218-238; these read IGAI…IDMF, IMES…LISF, IVSS…LNFL, FIIQ…SIIL, IIGP…MLLA, and LFLI…IYLF.

This sequence belongs to the UPF0259 family.

The protein resides in the cell membrane. In Buchnera aphidicola subsp. Acyrthosiphon pisum (strain Tuc7), this protein is UPF0259 membrane protein BUAPTUC7_273.